The chain runs to 353 residues: Ferredoxin--NADP reductase (353 aa).

Residues threonine 25, glutamate 44, glutamine 52, tyrosine 57, valine 97, phenylalanine 132, aspartate 298, and serine 339 each contribute to the FAD site.

It belongs to the ferredoxin--NADP reductase type 2 family. Homodimer. FAD is required as a cofactor.

The enzyme catalyses 2 reduced [2Fe-2S]-[ferredoxin] + NADP(+) + H(+) = 2 oxidized [2Fe-2S]-[ferredoxin] + NADPH. The sequence is that of Ferredoxin--NADP reductase from Chlorobium chlorochromatii (strain CaD3).